The following is a 146-amino-acid chain: Large ribosomal subunit protein bL19 (146 aa).

A disordered region spans residues 119–146 (DYRKKGEKGVEKVETTPVSADIETQVAE).

The protein belongs to the bacterial ribosomal protein bL19 family.

Functionally, this protein is located at the 30S-50S ribosomal subunit interface and may play a role in the structure and function of the aminoacyl-tRNA binding site. The chain is Large ribosomal subunit protein bL19 from Bartonella tribocorum (strain CIP 105476 / IBS 506).